Reading from the N-terminus, the 144-residue chain is PE family protein PE9 (144 aa).

Residues 1 to 87 (MSYMIATPAA…RTLTGGCGVF (87 aa)) enclose the PE domain. The interval 98-124 (AAEHRAAGAGRRQRRRRSGDGQWRLRQ) is disordered.

This sequence belongs to the mycobacterial PE family. In terms of assembly, forms a complex with PE10. The complex interacts with human TLR4.

It localises to the secreted. The protein resides in the cell wall. Its subcellular location is the cell surface. Its function is as follows. Together with PE10, induces macrophage apoptosis through human Toll-like receptor 4 (TLR4) signaling pathway. Interaction with TLR4 leads to increased levels of phospho-IRF-3, increase in the transcript levels of IFN-beta and pro-apoptotic genes, up-regulation of IL-10, down-regulation of IL-1b and enhanced levels of macrophage apoptosis. The sequence is that of PE family protein PE9 from Mycobacterium tuberculosis (strain ATCC 25618 / H37Rv).